The sequence spans 80 residues: MVAADHRALGSNKSYPASQTAEAIWPPARTLRYDRQSPWLATGFDRRMSQTVTGVGVQNCAVSKRRCSAVDHSSRTPYRR.

A signal peptide spans 1–20 (MVAADHRALGSNKSYPASQT). The interval 1 to 21 (MVAADHRALGSNKSYPASQTA) is disordered. Over residues 11 to 21 (SNKSYPASQTA) the composition is skewed to polar residues.

This is an uncharacterized protein from Mycobacterium tuberculosis (strain CDC 1551 / Oshkosh).